The following is a 70-amino-acid chain: DNA gyrase inhibitor YacG (70 aa).

Zn(2+) contacts are provided by Cys-20, Cys-23, Cys-35, and Cys-39.

Belongs to the DNA gyrase inhibitor YacG family. As to quaternary structure, interacts with GyrB. Requires Zn(2+) as cofactor.

Inhibits all the catalytic activities of DNA gyrase by preventing its interaction with DNA. Acts by binding directly to the C-terminal domain of GyrB, which probably disrupts DNA binding by the gyrase. The sequence is that of DNA gyrase inhibitor YacG from Rhizobium etli (strain CIAT 652).